Here is a 625-residue protein sequence, read N- to C-terminus: Probable potassium transport system protein Kup 2 (625 aa).

The next 12 membrane-spanning stretches (helical) occupy residues 15–35, 52–72, 98–118, 134–154, 164–184, 212–232, 246–266, 284–304, 336–356, 365–385, 394–414, and 417–437; these read LSFAALGVVFGDIGTSPLYAF, ILSLIFWSLIIIVSIKYLVIV, GGWLLFITLVGIGLIIGDGML, LSPNLAKYVLPVTLIILFFLF, IGVYFAPVMLVWFITIGILGF, FALFILGGVFLVMTGGEALFA, WFAVALPALLLCYFGQGAFVL, FLPVMIILATLATIIASQAII, VYLPLINFILALGTCSLVVIF, AYGIAVNLDMLITTVLVGIIA, FKILIFLLILIIELAFFAGNI, and LLTGGWIPILIAFLGFVVMYT.

Belongs to the HAK/KUP transporter (TC 2.A.72) family.

The protein resides in the cell inner membrane. The catalysed reaction is K(+)(in) + H(+)(in) = K(+)(out) + H(+)(out). In terms of biological role, transport of potassium into the cell. Likely operates as a K(+):H(+) symporter. This Legionella pneumophila (strain Paris) protein is Probable potassium transport system protein Kup 2.